A 414-amino-acid polypeptide reads, in one-letter code: 2,3-diketo-5-methylthiopentyl-1-phosphate enolase (414 aa).

Lysine 99 functions as the Proton acceptor in the catalytic mechanism. Substrate contacts are provided by residues lysine 148, 174–177 (KDDE), histidine 265, glycine 338, and 360–361 (GG). Residues lysine 174, aspartate 176, and glutamate 177 each coordinate Mg(2+). Position 174 is an N6-carboxylysine (lysine 174).

The protein belongs to the RuBisCO large chain family. Type IV subfamily. As to quaternary structure, homodimer. It depends on Mg(2+) as a cofactor.

The catalysed reaction is 5-methylsulfanyl-2,3-dioxopentyl phosphate = 2-hydroxy-5-methylsulfanyl-3-oxopent-1-enyl phosphate. It participates in amino-acid biosynthesis; L-methionine biosynthesis via salvage pathway; L-methionine from S-methyl-5-thio-alpha-D-ribose 1-phosphate: step 3/6. Functionally, catalyzes the enolization of 2,3-diketo-5-methylthiopentyl-1-phosphate (DK-MTP-1-P) into 2-hydroxy-3-keto-5-methylthiopentenyl-1-phosphate (HK-MTPenyl-1-P). The polypeptide is 2,3-diketo-5-methylthiopentyl-1-phosphate enolase (Bacillus cereus (strain AH820)).